Here is a 266-residue protein sequence, read N- to C-terminus: Ribonuclease HII (266 aa).

Positions 19-38 are disordered; that stretch reads HPGMIRDKEKPAPTKPGKGV. In terms of domain architecture, RNase H type-2 spans 58 to 246; the sequence is WPVAGCDEAG…VVAARQKHQP (189 aa). The a divalent metal cation site is built by aspartate 64, glutamate 65, and aspartate 155.

The protein belongs to the RNase HII family. Requires Mn(2+) as cofactor. It depends on Mg(2+) as a cofactor.

The protein resides in the cytoplasm. The catalysed reaction is Endonucleolytic cleavage to 5'-phosphomonoester.. Endonuclease that specifically degrades the RNA of RNA-DNA hybrids. The polypeptide is Ribonuclease HII (Rhodopseudomonas palustris (strain BisB18)).